The chain runs to 123 residues: Small ribosomal subunit protein uS12 (123 aa).

Aspartate 89 is subject to 3-methylthioaspartic acid.

It belongs to the universal ribosomal protein uS12 family. In terms of assembly, part of the 30S ribosomal subunit. Contacts proteins S8 and S17. May interact with IF1 in the 30S initiation complex.

Its function is as follows. With S4 and S5 plays an important role in translational accuracy. In terms of biological role, interacts with and stabilizes bases of the 16S rRNA that are involved in tRNA selection in the A site and with the mRNA backbone. Located at the interface of the 30S and 50S subunits, it traverses the body of the 30S subunit contacting proteins on the other side and probably holding the rRNA structure together. The combined cluster of proteins S8, S12 and S17 appears to hold together the shoulder and platform of the 30S subunit. The sequence is that of Small ribosomal subunit protein uS12 from Brucella anthropi (strain ATCC 49188 / DSM 6882 / CCUG 24695 / JCM 21032 / LMG 3331 / NBRC 15819 / NCTC 12168 / Alc 37) (Ochrobactrum anthropi).